The primary structure comprises 669 residues: CoB--CoM heterodisulfide reductase iron-sulfur subunit A 1 (669 aa).

153–176 serves as a coordination point for FAD; sequence GGGIAGIQAALDLADQGFKVYLVE. Position 200 (selenocysteine 200) is a non-standard amino acid, selenocysteine. 4Fe-4S ferredoxin-type domains follow at residues 239–270, 287–318, 584–613, and 617–646; these read KKPRYVDEDACTGCGVCAEVCPIEVPNEFDLG, LVYTIDMEHCIQCGLCEEACPQDPPAIDFDQE, ITATVDEDVCGGCGACAQVCPFDAIEMVEK, and RVAEVQDVACQGCGQCAAACPSGAMQLRYY. The [4Fe-4S] cluster site is built by cysteine 249, cysteine 252, cysteine 255, cysteine 259, cysteine 296, cysteine 299, cysteine 302, cysteine 306, cysteine 593, cysteine 596, cysteine 599, cysteine 603, cysteine 626, cysteine 629, cysteine 632, and cysteine 636.

This sequence belongs to the HdrA family. As to quaternary structure, the ferredoxin:CoB-CoM heterodisulfide reductase is composed of three subunits; HdrA, HdrB and HdrC. The cofactor is [4Fe-4S] cluster. FAD is required as a cofactor.

It participates in cofactor metabolism; coenzyme M-coenzyme B heterodisulfide reduction; coenzyme B and coenzyme M from coenzyme M-coenzyme B heterodisulfide: step 1/1. Its function is as follows. Part of a complex that catalyzes the reversible reduction of CoM-S-S-CoB to the thiol-coenzymes H-S-CoM (coenzyme M) and H-S-CoB (coenzyme B). This chain is CoB--CoM heterodisulfide reductase iron-sulfur subunit A 1 (hdrA1), found in Methanopyrus kandleri (strain AV19 / DSM 6324 / JCM 9639 / NBRC 100938).